The following is a 123-amino-acid chain: Putative iron-sulfur cluster insertion protein ErpA (123 aa).

Positions 51, 115, and 117 each coordinate iron-sulfur cluster.

This sequence belongs to the HesB/IscA family. Homodimer. Requires iron-sulfur cluster as cofactor.

Its function is as follows. Required for insertion of 4Fe-4S clusters. The polypeptide is Putative iron-sulfur cluster insertion protein ErpA (Burkholderia cenocepacia (strain HI2424)).